Reading from the N-terminus, the 374-residue chain is Pectate lyase 1 (374 aa).

The N-terminal stretch at 1-22 (MKYLLPSAAAGLLLLAAQPTMA) is a signal peptide. An intrachain disulfide couples Cys93 to Cys176. The Ca(2+) site is built by Asp150, Asp152, Glu187, and Asp191. The active site involves Arg239. A disulfide bridge connects residues Cys350 and Cys373.

Belongs to the polysaccharide lyase 1 family. PLADES subfamily. Requires Ca(2+) as cofactor.

It is found in the secreted. The enzyme catalyses Eliminative cleavage of (1-&gt;4)-alpha-D-galacturonan to give oligosaccharides with 4-deoxy-alpha-D-galact-4-enuronosyl groups at their non-reducing ends.. Its pathway is glycan metabolism; pectin degradation; 2-dehydro-3-deoxy-D-gluconate from pectin: step 2/5. Its function is as follows. Involved in maceration and soft-rotting of plant tissue. In Pectobacterium carotovorum (Erwinia carotovora), this protein is Pectate lyase 1 (pel1).